Reading from the N-terminus, the 63-residue chain is Conotoxin Cal12.5 (63 aa).

Positions 1–21 (MKVTCVLVVLLLLLPYGDLLG) are cleaved as a signal peptide.

This sequence belongs to the conotoxin O1 superfamily. Post-translationally, contains 4 disulfide bonds. In terms of tissue distribution, expressed by the venom duct.

Its subcellular location is the secreted. Its function is as follows. Probable neurotoxin. The polypeptide is Conotoxin Cal12.5 (Californiconus californicus (California cone)).